Consider the following 354-residue polypeptide: Chorismate synthase (354 aa).

2 residues coordinate NADP(+): Arg-48 and Arg-54. FMN is bound by residues 125–127, 238–239, Gly-278, 293–297, and Arg-319; these read RSS, NA, and KPTSS.

This sequence belongs to the chorismate synthase family. In terms of assembly, homotetramer. FMNH2 serves as cofactor.

It catalyses the reaction 5-O-(1-carboxyvinyl)-3-phosphoshikimate = chorismate + phosphate. It functions in the pathway metabolic intermediate biosynthesis; chorismate biosynthesis; chorismate from D-erythrose 4-phosphate and phosphoenolpyruvate: step 7/7. In terms of biological role, catalyzes the anti-1,4-elimination of the C-3 phosphate and the C-6 proR hydrogen from 5-enolpyruvylshikimate-3-phosphate (EPSP) to yield chorismate, which is the branch point compound that serves as the starting substrate for the three terminal pathways of aromatic amino acid biosynthesis. This reaction introduces a second double bond into the aromatic ring system. The protein is Chorismate synthase of Blochmanniella pennsylvanica (strain BPEN).